The sequence spans 121 residues: UPF0738 protein BLi01253/BL05110 (121 aa).

This sequence belongs to the UPF0738 family.

This is UPF0738 protein BLi01253/BL05110 from Bacillus licheniformis (strain ATCC 14580 / DSM 13 / JCM 2505 / CCUG 7422 / NBRC 12200 / NCIMB 9375 / NCTC 10341 / NRRL NRS-1264 / Gibson 46).